The following is a 262-amino-acid chain: 4-hydroxy-2-oxo-heptane-1,7-dioate aldolase (262 aa).

Residue His45 is the Proton acceptor of the active site. Substrate is bound at residue Gln147. Glu149 contacts a divalent metal cation. Substrate-binding residues include Ala174 and Asp175. A divalent metal cation is bound at residue Asp175.

This sequence belongs to the HpcH/HpaI aldolase family. As to quaternary structure, homohexamer; trimer of dimers. A divalent metal cation serves as cofactor.

The enzyme catalyses 4-hydroxy-2-oxoheptanedioate = succinate semialdehyde + pyruvate. Its pathway is aromatic compound metabolism; 4-hydroxyphenylacetate degradation; pyruvate and succinate semialdehyde from 4-hydroxyphenylacetate: step 7/7. Functionally, catalyzes the reversible retro-aldol cleavage of 4-hydroxy-2-ketoheptane-1,7-dioate (HKHD) to pyruvate and succinic semialdehyde. This is 4-hydroxy-2-oxo-heptane-1,7-dioate aldolase from Shigella boydii serotype 18 (strain CDC 3083-94 / BS512).